The chain runs to 701 residues: Elongation factor G (701 aa).

The 277-residue stretch at 11 to 287 (TKVRNIGIMA…AVIDYLPSPL (277 aa)) folds into the tr-type G domain. Residues 20 to 27 (AHIDAGKT), 84 to 88 (DTPGH), and 138 to 141 (NKMD) each bind GTP.

Belongs to the TRAFAC class translation factor GTPase superfamily. Classic translation factor GTPase family. EF-G/EF-2 subfamily.

It is found in the cytoplasm. Catalyzes the GTP-dependent ribosomal translocation step during translation elongation. During this step, the ribosome changes from the pre-translocational (PRE) to the post-translocational (POST) state as the newly formed A-site-bound peptidyl-tRNA and P-site-bound deacylated tRNA move to the P and E sites, respectively. Catalyzes the coordinated movement of the two tRNA molecules, the mRNA and conformational changes in the ribosome. This is Elongation factor G from Mycobacterium avium (strain 104).